Consider the following 278-residue polypeptide: Large ribosomal subunit protein uL2 (278 aa).

The tract at residues 208-278 is disordered; it reads AGRSRWMGKR…LIIRHRKGRK (71 aa). Positions 209 to 219 are enriched in basic residues; sequence GRSRWMGKRPQ. Residues 258–270 show a composition bias toward basic and acidic residues; it reads KTRDSKKASEKLI.

Belongs to the universal ribosomal protein uL2 family. As to quaternary structure, part of the 50S ribosomal subunit. Forms a bridge to the 30S subunit in the 70S ribosome.

Functionally, one of the primary rRNA binding proteins. Required for association of the 30S and 50S subunits to form the 70S ribosome, for tRNA binding and peptide bond formation. It has been suggested to have peptidyltransferase activity; this is somewhat controversial. Makes several contacts with the 16S rRNA in the 70S ribosome. This chain is Large ribosomal subunit protein uL2, found in Lactobacillus delbrueckii subsp. bulgaricus (strain ATCC 11842 / DSM 20081 / BCRC 10696 / JCM 1002 / NBRC 13953 / NCIMB 11778 / NCTC 12712 / WDCM 00102 / Lb 14).